The sequence spans 111 residues: Large ribosomal subunit protein uL22 (111 aa).

The protein belongs to the universal ribosomal protein uL22 family. As to quaternary structure, part of the 50S ribosomal subunit.

This protein binds specifically to 23S rRNA; its binding is stimulated by other ribosomal proteins, e.g. L4, L17, and L20. It is important during the early stages of 50S assembly. It makes multiple contacts with different domains of the 23S rRNA in the assembled 50S subunit and ribosome. Its function is as follows. The globular domain of the protein is located near the polypeptide exit tunnel on the outside of the subunit, while an extended beta-hairpin is found that lines the wall of the exit tunnel in the center of the 70S ribosome. This is Large ribosomal subunit protein uL22 from Mycoplasma mycoides subsp. mycoides SC (strain CCUG 32753 / NCTC 10114 / PG1).